A 72-amino-acid polypeptide reads, in one-letter code: Cytochrome c oxidase subunit 2 (72 aa).

Residues 1–14 (MAHPSQLGFQDAAS) lie on the Mitochondrial intermembrane side of the membrane. Residues 15–45 (PVMEELLHFHDHALMIVFLISTLVLYIIVAM) form a helical membrane-spanning segment. Residues 46–72 (VSTKLTNKYXLDSQEIEVIWTXLPAVI) are Mitochondrial matrix-facing.

The protein belongs to the cytochrome c oxidase subunit 2 family. In terms of assembly, component of the cytochrome c oxidase (complex IV, CIV), a multisubunit enzyme composed of 14 subunits. The complex is composed of a catalytic core of 3 subunits MT-CO1, MT-CO2 and MT-CO3, encoded in the mitochondrial DNA, and 11 supernumerary subunits COX4I, COX5A, COX5B, COX6A, COX6B, COX6C, COX7A, COX7B, COX7C, COX8 and NDUFA4, which are encoded in the nuclear genome. The complex exists as a monomer or a dimer and forms supercomplexes (SCs) in the inner mitochondrial membrane with NADH-ubiquinone oxidoreductase (complex I, CI) and ubiquinol-cytochrome c oxidoreductase (cytochrome b-c1 complex, complex III, CIII), resulting in different assemblies (supercomplex SCI(1)III(2)IV(1) and megacomplex MCI(2)III(2)IV(2)). Found in a complex with TMEM177, COA6, COX18, COX20, SCO1 and SCO2. Interacts with TMEM177 in a COX20-dependent manner. Interacts with COX20. Interacts with COX16. Cu cation serves as cofactor.

Its subcellular location is the mitochondrion inner membrane. It catalyses the reaction 4 Fe(II)-[cytochrome c] + O2 + 8 H(+)(in) = 4 Fe(III)-[cytochrome c] + 2 H2O + 4 H(+)(out). In terms of biological role, component of the cytochrome c oxidase, the last enzyme in the mitochondrial electron transport chain which drives oxidative phosphorylation. The respiratory chain contains 3 multisubunit complexes succinate dehydrogenase (complex II, CII), ubiquinol-cytochrome c oxidoreductase (cytochrome b-c1 complex, complex III, CIII) and cytochrome c oxidase (complex IV, CIV), that cooperate to transfer electrons derived from NADH and succinate to molecular oxygen, creating an electrochemical gradient over the inner membrane that drives transmembrane transport and the ATP synthase. Cytochrome c oxidase is the component of the respiratory chain that catalyzes the reduction of oxygen to water. Electrons originating from reduced cytochrome c in the intermembrane space (IMS) are transferred via the dinuclear copper A center (CU(A)) of subunit 2 and heme A of subunit 1 to the active site in subunit 1, a binuclear center (BNC) formed by heme A3 and copper B (CU(B)). The BNC reduces molecular oxygen to 2 water molecules using 4 electrons from cytochrome c in the IMS and 4 protons from the mitochondrial matrix. In Gomphosus varius (Bird wrasse), this protein is Cytochrome c oxidase subunit 2 (mt-co2).